Consider the following 426-residue polypeptide: GTPase Obg (426 aa).

In terms of domain architecture, Obg spans Met-1 to Val-158. The region spanning Ala-159–Lys-330 is the OBG-type G domain. Residues Gly-165–Ser-172, Phe-190–Lys-194, Asp-212–Gly-215, Asn-282–Asp-285, and Ser-311–Ala-313 each bind GTP. Ser-172 and Thr-192 together coordinate Mg(2+). Positions Asp-349 to Glu-426 constitute an OCT domain.

Belongs to the TRAFAC class OBG-HflX-like GTPase superfamily. OBG GTPase family. As to quaternary structure, monomer. Requires Mg(2+) as cofactor.

Its subcellular location is the cytoplasm. Its function is as follows. An essential GTPase which binds GTP, GDP and possibly (p)ppGpp with moderate affinity, with high nucleotide exchange rates and a fairly low GTP hydrolysis rate. Plays a role in control of the cell cycle, stress response, ribosome biogenesis and in those bacteria that undergo differentiation, in morphogenesis control. This chain is GTPase Obg, found in Halothermothrix orenii (strain H 168 / OCM 544 / DSM 9562).